Here is a 535-residue protein sequence, read N- to C-terminus: Flavonoid 3'-monooxygenase CYP75B4 (535 aa).

A helical membrane pass occupies residues 8–28 (ISTSLLLTTVALSVIVCYALV). Cysteine 469 contributes to the heme binding site.

The protein belongs to the cytochrome P450 family. Heme serves as cofactor.

The protein resides in the membrane. The enzyme catalyses a 3'-unsubstituted flavone + reduced [NADPH--hemoprotein reductase] + O2 = a 3'-hydroxyflavone + oxidized [NADPH--hemoprotein reductase] + H2O + H(+). It functions in the pathway secondary metabolite biosynthesis; flavonoid biosynthesis. Functionally, catalyzes the 3'-hydroxylation of the flavonoid B-ring to the 3',4'-hydroxylated state. Catalyzes in vitro 3'-hydroxylation of different flavonoids. Catalyzes the conversion of apigenin to luteolin, naringenin to eriodictyol, and kaempferol to quercetin. Possesses specific 5'-hydroxylase activity toward chrysoeriol (a 3'-methoxylated flavone) and is indispensable for tricin formation. Converts chrysoeriol to selgin, a precursor of tricin, suggesting that chrysoeriol, instead of tricetin, is an intermediate in tricin biosynthesis. In Oryza sativa subsp. japonica (Rice), this protein is Flavonoid 3'-monooxygenase CYP75B4.